A 255-amino-acid chain; its full sequence is Small ribosomal subunit protein uS2 (255 aa).

This sequence belongs to the universal ribosomal protein uS2 family.

The polypeptide is Small ribosomal subunit protein uS2 (rpsB) (Streptococcus pyogenes serotype M1).